The following is a 126-amino-acid chain: Glycine cleavage system H protein (126 aa).

The 82-residue stretch at 24-105 (TLTVGITDHA…AYGVWLFKLK (82 aa)) folds into the Lipoyl-binding domain. Lys65 bears the N6-lipoyllysine mark.

The protein belongs to the GcvH family. In terms of assembly, the glycine cleavage system is composed of four proteins: P, T, L and H. The cofactor is (R)-lipoate.

The glycine cleavage system catalyzes the degradation of glycine. The H protein shuttles the methylamine group of glycine from the P protein to the T protein. The protein is Glycine cleavage system H protein of Burkholderia vietnamiensis (strain G4 / LMG 22486) (Burkholderia cepacia (strain R1808)).